Here is a 215-residue protein sequence, read N- to C-terminus: Riboflavin synthase (215 aa).

Lumazine-binding repeat units follow at residues 1–96 (MFTG…FGGH) and 97–193 (IVSG…EQFL). Residues 4–6 (GII), 47–49 (CLT), 61–66 (DVMSET), 100–102 (GHI), Lys-135, 144–146 (SLT), and 158–163 (SIIPHT) each bind 2,4-dihydroxypteridine.

As to quaternary structure, homotrimer.

It carries out the reaction 2 6,7-dimethyl-8-(1-D-ribityl)lumazine + H(+) = 5-amino-6-(D-ribitylamino)uracil + riboflavin. It participates in cofactor biosynthesis; riboflavin biosynthesis; riboflavin from 2-hydroxy-3-oxobutyl phosphate and 5-amino-6-(D-ribitylamino)uracil: step 2/2. Catalyzes the dismutation of two molecules of 6,7-dimethyl-8-ribityllumazine, resulting in the formation of riboflavin and 5-amino-6-(D-ribitylamino)uracil. The chain is Riboflavin synthase (ribE) from Actinobacillus pleuropneumoniae (Haemophilus pleuropneumoniae).